A 454-amino-acid chain; its full sequence is uncharacterized protein (454 aa).

An HNH domain is found at 364-405 (CSRPGCDAPAYHSEVHHVTPWTTTHRTDINDLTLACGPDNRL).

This sequence belongs to the Rv1128c/1148c/1588c/1702c/1945/3466 family.

This is an uncharacterized protein from Mycobacterium tuberculosis (strain ATCC 25618 / H37Rv).